Reading from the N-terminus, the 428-residue chain is Glutamyl-tRNA reductase (428 aa).

Residues 49–52, Ser109, 114–116, and Gln120 each bind substrate; these read TCNR and EGQ. Cys50 serves as the catalytic Nucleophile. 189–194 lines the NADP(+) pocket; sequence GAGKMS.

It belongs to the glutamyl-tRNA reductase family. In terms of assembly, homodimer.

The enzyme catalyses (S)-4-amino-5-oxopentanoate + tRNA(Glu) + NADP(+) = L-glutamyl-tRNA(Glu) + NADPH + H(+). Its pathway is porphyrin-containing compound metabolism; protoporphyrin-IX biosynthesis; 5-aminolevulinate from L-glutamyl-tRNA(Glu): step 1/2. The protein operates within porphyrin-containing compound metabolism; chlorophyll biosynthesis. Functionally, catalyzes the NADPH-dependent reduction of glutamyl-tRNA(Glu) to glutamate 1-semialdehyde (GSA). The polypeptide is Glutamyl-tRNA reductase (Microcystis aeruginosa (strain NIES-843 / IAM M-2473)).